The sequence spans 76 residues: Histone acetyltransferase (76 aa).

In terms of assembly, physically interacts with histone H3 in infected macrophages.

The protein resides in the secreted. The protein localises to the host cytoplasm. Its subcellular location is the host nucleus. It catalyses the reaction L-lysyl-[protein] + acetyl-CoA = N(6)-acetyl-L-lysyl-[protein] + CoA + H(+). Its activity is regulated as follows. Is completely inhibited by anacardic acid, an inhibitor of HAT activity. In terms of biological role, histone acetyltransferase, which by binding to the host chromatin, may manipulate the expression of host genes involved in anti-inflammatory responses to evade clearance and to survive in the intracellular milieu. Acetylates histone H3 at the 'Lys-9' and 'Lys-14' positions. The polypeptide is Histone acetyltransferase (Mycobacterium tuberculosis (strain CDC 1551 / Oshkosh)).